The chain runs to 470 residues: Dendritic cell-specific transmembrane protein (470 aa).

Topologically, residues 1 to 33 are cytoplasmic; the sequence is MRLWTLGTSIFLRLWGTYVFPRSPSWLDFIQHL. Residues 34–54 traverse the membrane as a helical segment; that stretch reads GVCCFVAFLSVSLFSAAFYWI. Residue Leu55 is a topological domain, extracellular. A helical membrane pass occupies residues 56-76; the sequence is PPVALLSSVWMITCVFLCCSK. The Cytoplasmic segment spans residues 77–97; sequence RARCFILLAVLSCGLREGRNA. A helical transmembrane segment spans residues 98-118; it reads LIAAGTGVVIFGHVENIFYNF. The Extracellular portion of the chain corresponds to 119–209; the sequence is RGLLDSMTCN…MVVTTELLTS (91 aa). The chain crosses the membrane as a helical span at residues 210–230; it reads VGQKLLALAGLLLILVSTGLF. Topologically, residues 231–292 are cytoplasmic; that stretch reads LKRFLGPCGW…LQLTPKEKKT (62 aa). The helical transmembrane segment at 293–313 threads the bilayer; the sequence is LGLFFLPVLTYLYMWVLFAAV. Topologically, residues 314 to 376 are extracellular; that stretch reads DYLLYRLISS…PKPRLSVSET (63 aa). A helical membrane pass occupies residues 377 to 397; that stretch reads WVPLSIILLTLIILGLLSSML. Residues 398-470 lie on the Cytoplasmic side of the membrane; the sequence is MQLKILVSVS…QTIPANEDDL (73 aa).

In terms of assembly, interacts with CREB3. Monomer. Homodimer. Isoform 1 interacts (via the C-terminus cytoplasmic tail) with OS9 isoform 1 (via the C-terminus tail); the interaction induces DCSTAMP redistribution to the endoplasmic reticulum-Golgi intermediate compartment. Isoform 1 interacts (via the C-terminus cytoplasmic tail) with OS9 isoform 2 (via the C-terminus tail). Glycosylated. In terms of tissue distribution, expressed in macrophages and bone marrow dendritic cells (BM-DC). Weakly expressed in the spleen and lymph node. Highly expressed in multi-nuclear osteoclasts compared to mono-nuclear macrophages. Expressed in foreign body giant cells (FBGCs). Isoform 1 and isoform 2 are expressed in osteoclasts.

The protein resides in the cell membrane. It localises to the endoplasmic reticulum membrane. The protein localises to the endoplasmic reticulum-Golgi intermediate compartment membrane. Its subcellular location is the endosome. Functionally, probable cell surface receptor that plays several roles in cellular fusion, cell differentiation, bone and immune homeostasis. Plays a role in TNFSF11-mediated osteoclastogenesis. Cooperates with OCSTAMP in modulating cell-cell fusion in both osteoclasts and foreign body giant cells (FBGCs). Participates in osteoclast bone resorption. Involved in inducing the expression of tartrate-resistant acid phosphatase in osteoclast precursors. Plays a role in haematopoietic stem cell differentiation of bone marrow cells toward the myeloid lineage. Inhibits the development of neutrophilic granulocytes. Plays also a role in the regulation of dendritic cell (DC) antigen presentation activity by controlling phagocytic activity. Involved in the maintenance of immune self-tolerance and avoidance of autoimmune reactions. This is Dendritic cell-specific transmembrane protein (Dcstamp) from Mus musculus (Mouse).